Reading from the N-terminus, the 266-residue chain is uncharacterized protein (266 aa).

Position 176 is a phosphoserine (S176). T178 is subject to Phosphothreonine.

This is an uncharacterized protein from Schizosaccharomyces pombe (strain 972 / ATCC 24843) (Fission yeast).